Consider the following 460-residue polypeptide: CWF19-like protein 2 homolog (460 aa).

3 disordered regions span residues 38–78 (GKTF…EDEK), 103–175 (KLES…TGTA), and 193–227 (RRHD…ESIK). The span at 54–68 (GSQQVRNDVMKSSDS) shows a compositional bias: polar residues. The stretch at 84–106 (KILKAEMKGDTDLVKKLKRKLES) forms a coiled coil. Composition is skewed to basic and acidic residues over residues 113-131 (EPPK…DREG), 139-172 (RRSD…EEKT), and 205-227 (EMQK…ESIK). Residues 210–231 (KKKSDEKDKKRKEKESIKEHKR) adopt a coiled-coil conformation.

Belongs to the CWF19 family.

The protein is CWF19-like protein 2 homolog of Caenorhabditis elegans.